The sequence spans 228 residues: Ribonuclease S-4 (228 aa).

The first 27 residues, 1 to 27 (MGITGMTYMFTMVLSLIVLIFSASTVG), serve as a signal peptide directing secretion. Gln-36 lines the RNA pocket. Cys-42 and Cys-49 are oxidised to a cystine. Position 60 (His-60) interacts with RNA. Residue His-60 is the Proton donor of the active site. A disulfide bond links Cys-75 and Cys-119. N-linked (GlcNAc) asparagine glycosylation is present at Asn-87. 98–99 (NV) contacts RNA. N-linked (GlcNAc...) asparagine glycosylation is present at Asn-101. Residues Phe-108, 111–112 (RE), and 115–116 (KH) contribute to the RNA site. Glu-112 is an active-site residue. Catalysis depends on His-116, which acts as the Proton acceptor. Asn-144, Asn-160, and Asn-175 each carry an N-linked (GlcNAc...) asparagine glycan. Disulfide bonds link Cys-183–Cys-222 and Cys-199–Cys-210.

It belongs to the RNase T2 family. In terms of processing, the N-glycans attached at Asn-101, Asn-160 and Asn-175 consist predominantly of disaccharide (GlcNAc-GlcNAc). The N-glycan at 87 is 53% monosaccharide and 47% disaccharide. The N-glycan at Asn-144 contains mannose and xylose.

The protein localises to the secreted. Its subcellular location is the extracellular space. It carries out the reaction a ribonucleotidyl-ribonucleotide-RNA + H2O = a 3'-end 3'-phospho-ribonucleotide-RNA + a 5'-end dephospho-ribonucleoside-RNA + H(+). Self-incompatibility (SI) is the inherited ability of a flowering plant to prevent self-fertilization by discriminating between self and non-self pollen during pollination. In many species, self-incompatibility is controlled by the single, multiallelic locus S. The chain is Ribonuclease S-4 from Pyrus pyrifolia (Chinese pear).